The following is a 210-amino-acid chain: NDR1/HIN1-like protein 12 (210 aa).

A helical transmembrane segment spans residues 23 to 43; it reads GVIIGFIIIVLITIFLVWIIL. Asn61 carries N-linked (GlcNAc...) asparagine glycosylation.

As to quaternary structure, may form oligomers or be a component of larger protein complex in plasma membranes. Expressed in leaves, stems and flowers, and, to a lower extent, in siliques and roots.

Its subcellular location is the cell membrane. Its function is as follows. May play a role in plant immunity. The polypeptide is NDR1/HIN1-like protein 12 (Arabidopsis thaliana (Mouse-ear cress)).